The following is a 944-amino-acid chain: MVGLVPAGSAWGGRALAVLGVTLLVALARGLLPFFLGGRDLLWGQSGEASVLGVVEESRRVVDGAIQHTVRRDLSKRGLPSPSQLLSFSKLPEPTSRAVSRAAEIMEASVQAVRTRVYGKLGRSWPLTDTLPEAVLDTIANASGCRPHMLPPRCPDTCLARKYRLITGACNNRDHPRWGASNTALARWLPPAYEDGISEPRGWNPHVLYSGFPLPPVREVTRQVIRVPNEAVTEDDQYSDLLTVWGQYIDHDVAFTPQSASGAAFGAGADCQLTCENRSPCFPIQLPPDASGPACLPFSRSSAACGTGIQGAFFGNLSSANPRQQMNGLTSFLDASTVYGSSPALEKQLRNWTSAEGLLRVNTRHWDAGRAHLPFMRPPAPLACVPEPGTRGTAGAPCFLAGDSRASEVPTLAALHTLWLREHNRLASALKALNAHWSADTAYQEARKVVGALHQIITLRDYVPKVLGPEAFQQHVGPYEGYDPTMDPTVSNVFSTAAFRLGHATVHPLVRRLDARFQEHPGLPPLGLQDAFFPWRLLKEGGLDPLLRGLLASPAKLPVQEQLMNEELTERLFVLGSSGSLDLASINLQRGRDHGLPGYNAWREFCGLGRLHTRAELRSAVANATLAGRIMDLYGHPDNIDVWLGGLAEPLLPRARTGPLFACLIGRQMKALRDGDRFWWESSGVFTDEQRRELARHSLSRVICDNTGLPSVPADAFQVSRFPQDFEPCENIPGLNLDVWREALPQGDACGLPDSLDNGDVVLCGEAGRRVLVFSCRHGFKLQGPEQVACSPRGGAVRAPVCRDINECEDASHPPCHGSARCRNTKGGFRCECTDPAVLGEDGTTCVDSGRLPKASLVSIALGIVLVVGLAGLTWTLVCRWAHAGRKASLSIAELGGRGAPPPGRGAGQDGASGSLVPPLGPQGRTRAVDPTSSRSHVAQGSPA.

Positions 1-30 (MVGLVPAGSAWGGRALAVLGVTLLVALARG) are cleaved as a signal peptide. Residues 31-858 (LLPFFLGGRD…SGRLPKASLV (828 aa)) lie on the Extracellular side of the membrane. Asparagine 141 carries N-linked (GlcNAc...) asparagine glycosylation. Cysteines 154 and 170 form a disulfide. Residue aspartate 250 coordinates heme b. Histidine 251 functions as the Proton acceptor in the catalytic mechanism. Aspartate 252 is a Ca(2+) binding site. Disulfide bonds link cysteine 271–cysteine 281 and cysteine 275–cysteine 295. Asparagine 316 is a glycosylation site (N-linked (GlcNAc...) asparagine). Ca(2+)-binding residues include threonine 330, phenylalanine 332, aspartate 334, and serine 336. A glycan (N-linked (GlcNAc...) asparagine) is linked at asparagine 351. Residues glutamate 408 and histidine 503 each contribute to the heme b site. Cystine bridges form between cysteine 606-cysteine 663, cysteine 704-cysteine 729, cysteine 750-cysteine 790, cysteine 776-cysteine 802, cysteine 808-cysteine 822, cysteine 816-cysteine 831, and cysteine 833-cysteine 846. Asparagine 623 carries an N-linked (GlcNAc...) asparagine glycan. A Sushi domain is found at 748–804 (DACGLPDSLDNGDVVLCGEAGRRVLVFSCRHGFKLQGPEQVACSPRGGAVRAPVCRD). The EGF-like; calcium-binding domain occupies 804–847 (DINECEDASHPPCHGSARCRNTKGGFRCECTDPAVLGEDGTTCV). Residues 859-879 (SIALGIVLVVGLAGLTWTLVC) form a helical membrane-spanning segment. Topologically, residues 880-944 (RWAHAGRKAS…RSHVAQGSPA (65 aa)) are cytoplasmic. A disordered region spans residues 895-944 (LGGRGAPPPGRGAGQDGASGSLVPPLGPQGRTRAVDPTSSRSHVAQGSPA). The segment covering 931-944 (PTSSRSHVAQGSPA) has biased composition (polar residues).

It belongs to the peroxidase family. XPO subfamily. In terms of assembly, interacts with DUOX1, DUOX2 and CYBA. Requires Ca(2+) as cofactor. The cofactor is heme b. Heme is covalently bound through a H(2)O(2)-dependent autocatalytic process. Heme insertion is important for the delivery of protein at the cell surface. Post-translationally, cleaved in its N-terminal part.

The protein resides in the membrane. It catalyses the reaction 2 iodide + H2O2 + 2 H(+) = diiodine + 2 H2O. The enzyme catalyses [thyroglobulin]-L-tyrosine + iodide + H2O2 + H(+) = [thyroglobulin]-3-iodo-L-tyrosine + 2 H2O. The catalysed reaction is [thyroglobulin]-3-iodo-L-tyrosine + iodide + H2O2 + H(+) = [thyroglobulin]-3,5-diiodo-L-tyrosine + 2 H2O. It carries out the reaction 2 [thyroglobulin]-3,5-diiodo-L-tyrosine + H2O2 = [thyroglobulin]-L-thyroxine + [thyroglobulin]-dehydroalanine + 2 H2O. It catalyses the reaction [thyroglobulin]-3-iodo-L-tyrosine + [thyroglobulin]-3,5-diiodo-L-tyrosine + H2O2 = [thyroglobulin]-3,3',5-triiodo-L-thyronine + [thyroglobulin]-dehydroalanine + 2 H2O. It functions in the pathway hormone biosynthesis; thyroid hormone biosynthesis. Iodination and coupling of the hormonogenic tyrosines in thyroglobulin to yield the thyroid hormones T(3) and T(4). This Canis lupus familiaris (Dog) protein is Thyroid peroxidase (TPO).